The primary structure comprises 61 residues: Small ribosomal subunit protein uS14B (61 aa).

4 residues coordinate Zn(2+): cysteine 24, cysteine 27, cysteine 40, and cysteine 43.

This sequence belongs to the universal ribosomal protein uS14 family. Zinc-binding uS14 subfamily. As to quaternary structure, part of the 30S ribosomal subunit. Contacts proteins S3 and S10. Zn(2+) serves as cofactor.

Its function is as follows. Binds 16S rRNA, required for the assembly of 30S particles and may also be responsible for determining the conformation of the 16S rRNA at the A site. In Cutibacterium acnes (strain DSM 16379 / KPA171202) (Propionibacterium acnes), this protein is Small ribosomal subunit protein uS14B.